The chain runs to 181 residues: Alkyl hydroperoxide reductase AhpD (181 aa).

Cysteine 131 serves as the catalytic Proton donor. The cysteines at positions 131 and 134 are disulfide-linked. The active-site Cysteine sulfenic acid (-SOH) intermediate is the cysteine 134.

This sequence belongs to the AhpD family.

The catalysed reaction is N(6)-[(R)-dihydrolipoyl]-L-lysyl-[lipoyl-carrier protein] + a hydroperoxide = N(6)-[(R)-lipoyl]-L-lysyl-[lipoyl-carrier protein] + an alcohol + H2O. Functionally, antioxidant protein with alkyl hydroperoxidase activity. Required for the reduction of the AhpC active site cysteine residues and for the regeneration of the AhpC enzyme activity. The polypeptide is Alkyl hydroperoxide reductase AhpD (Rhodopseudomonas palustris (strain BisB18)).